Here is a 303-residue protein sequence, read N- to C-terminus: Taste receptor type 2 member 13 (303 aa).

At 1-7 the chain is on the extracellular side; sequence MESALPS. A helical transmembrane segment spans residues 8–28; it reads IFTLVIIAEFIIGNLSNGFIV. The Cytoplasmic segment spans residues 29–55; that stretch reads LINCIDWVSKRELSSVDKLLIILAISR. The chain crosses the membrane as a helical span at residues 56–76; sequence IGLIWEILVSWFLALHYLAIF. Over 77 to 85 the chain is Extracellular; it reads VSGTGLRIM. Residues 86-106 traverse the membrane as a helical segment; sequence IFSWIVSNHFNLWLATIFSIF. The Cytoplasmic portion of the chain corresponds to 107-128; it reads YLLKIASFSSPAFLYLKWRVNK. The chain crosses the membrane as a helical span at residues 129 to 149; that stretch reads VILMILLGTLVFLFLNLIQIN. Topologically, residues 150 to 184 are extracellular; sequence MHIKDWLDRYERNTTWNFSMSDFETFSVSVKFTMT. N162 and N166 each carry an N-linked (GlcNAc...) asparagine glycan. The chain crosses the membrane as a helical span at residues 185-205; the sequence is MFSLTPFTVAFISFLLLIFSL. Over 206–232 the chain is Cytoplasmic; sequence QKHLQKMQLNYKGHRDPRTKVHTNALK. Residues 233–253 traverse the membrane as a helical segment; that stretch reads IVISFLLFYASFFLCVLISWI. The Extracellular segment spans residues 254-261; that stretch reads SELYQNTV. The helical transmembrane segment at 262 to 282 threads the bilayer; that stretch reads IYMLCETIGVFSPSSHSFLLI. Residues 283–303 lie on the Cytoplasmic side of the membrane; it reads LGNAKLRQAFLLVAAKVWAKR.

The protein belongs to the G-protein coupled receptor T2R family. In terms of tissue distribution, expressed in subsets of taste receptor cells of the tongue and palate epithelium and exclusively in gustducin-positive cells.

The protein localises to the membrane. Receptor that may play a role in the perception of bitterness and is gustducin-linked. May play a role in sensing the chemical composition of the gastrointestinal content. The activity of this receptor may stimulate alpha gustducin, mediate PLC-beta-2 activation and lead to the gating of TRPM5. This chain is Taste receptor type 2 member 13 (TAS2R13), found in Homo sapiens (Human).